Reading from the N-terminus, the 572-residue chain is Urease subunit alpha (572 aa).

One can recognise a Urease domain in the interval 134–572; sequence AGIDSHIHLI…ASMNQRYFFG (439 aa). The Ni(2+) site is built by histidine 139, histidine 141, and lysine 222. Lysine 222 is modified (N6-carboxylysine). Histidine 224 is a binding site for substrate. Histidine 251 and histidine 277 together coordinate Ni(2+). Histidine 325 serves as the catalytic Proton donor. Aspartate 365 is a Ni(2+) binding site.

The protein belongs to the metallo-dependent hydrolases superfamily. Urease alpha subunit family. Heterotrimer of UreA (gamma), UreB (beta) and UreC (alpha) subunits. Three heterotrimers associate to form the active enzyme. It depends on Ni cation as a cofactor. Carboxylation allows a single lysine to coordinate two nickel ions.

Its subcellular location is the cytoplasm. The enzyme catalyses urea + 2 H2O + H(+) = hydrogencarbonate + 2 NH4(+). It functions in the pathway nitrogen metabolism; urea degradation; CO(2) and NH(3) from urea (urease route): step 1/1. The protein is Urease subunit alpha of Yersinia pseudotuberculosis serotype O:1b (strain IP 31758).